The primary structure comprises 177 residues: ATP synthase subunit delta (177 aa).

Belongs to the ATPase delta chain family. As to quaternary structure, F-type ATPases have 2 components, F(1) - the catalytic core - and F(0) - the membrane proton channel. F(1) has five subunits: alpha(3), beta(3), gamma(1), delta(1), epsilon(1). F(0) has three main subunits: a(1), b(2) and c(10-14). The alpha and beta chains form an alternating ring which encloses part of the gamma chain. F(1) is attached to F(0) by a central stalk formed by the gamma and epsilon chains, while a peripheral stalk is formed by the delta and b chains.

The protein localises to the cell inner membrane. F(1)F(0) ATP synthase produces ATP from ADP in the presence of a proton or sodium gradient. F-type ATPases consist of two structural domains, F(1) containing the extramembraneous catalytic core and F(0) containing the membrane proton channel, linked together by a central stalk and a peripheral stalk. During catalysis, ATP synthesis in the catalytic domain of F(1) is coupled via a rotary mechanism of the central stalk subunits to proton translocation. Functionally, this protein is part of the stalk that links CF(0) to CF(1). It either transmits conformational changes from CF(0) to CF(1) or is implicated in proton conduction. In Haemophilus influenzae (strain PittEE), this protein is ATP synthase subunit delta.